Here is a 276-residue protein sequence, read N- to C-terminus: Vitamin B12-binding protein (276 aa).

The N-terminal stretch at 1 to 20 (MLVIRLIACTFLFITPSLLA) is a signal peptide. Residues 27–274 (RIISLAPHAT…QVCTYLKIAQ (248 aa)) enclose the Fe/B12 periplasmic-binding domain. Y54 is a cyanocob(III)alamin binding site. C187 and C267 are disulfide-bonded.

The protein belongs to the BtuF family. In terms of assembly, the complex is composed of two ATP-binding proteins (BtuD), two transmembrane proteins (BtuC) and a solute-binding protein (BtuF).

It is found in the periplasm. Functionally, part of the ABC transporter complex BtuCDF involved in vitamin B12 import. Binds vitamin B12 and delivers it to the periplasmic surface of BtuC. This is Vitamin B12-binding protein from Vibrio cholerae serotype O1 (strain ATCC 39541 / Classical Ogawa 395 / O395).